The sequence spans 1388 residues: DNA-directed RNA polymerase subunit beta (1388 aa).

The protein belongs to the RNA polymerase beta chain family. The RNAP catalytic core consists of 2 alpha, 1 beta, 1 beta' and 1 omega subunit. When a sigma factor is associated with the core the holoenzyme is formed, which can initiate transcription.

The enzyme catalyses RNA(n) + a ribonucleoside 5'-triphosphate = RNA(n+1) + diphosphate. Its function is as follows. DNA-dependent RNA polymerase catalyzes the transcription of DNA into RNA using the four ribonucleoside triphosphates as substrates. The polypeptide is DNA-directed RNA polymerase subunit beta (Xylella fastidiosa (strain Temecula1 / ATCC 700964)).